The sequence spans 415 residues: Branched-chain-amino-acid aminotransferase, cytosolic (415 aa).

Lys244 carries the post-translational modification N6-(pyridoxal phosphate)lysine.

It belongs to the class-IV pyridoxal-phosphate-dependent aminotransferase family. Pyridoxal 5'-phosphate serves as cofactor.

Its subcellular location is the cytoplasm. It catalyses the reaction L-leucine + 2-oxoglutarate = 4-methyl-2-oxopentanoate + L-glutamate. It carries out the reaction L-isoleucine + 2-oxoglutarate = (S)-3-methyl-2-oxopentanoate + L-glutamate. The enzyme catalyses L-valine + 2-oxoglutarate = 3-methyl-2-oxobutanoate + L-glutamate. In terms of biological role, catalyzes the first reaction in the catabolism of the essential branched chain amino acids leucine, isoleucine, and valine. The chain is Branched-chain-amino-acid aminotransferase, cytosolic (bcat-1) from Caenorhabditis elegans.